A 62-amino-acid polypeptide reads, in one-letter code: MAKGVRIIVTLECTECRSNSNKRSPGVSRYTTTKNRRNTTSRLELKKFCTHCNKHTNHKEIK.

Belongs to the bacterial ribosomal protein bL33 family.

The polypeptide is Large ribosomal subunit protein bL33 (Acaryochloris marina (strain MBIC 11017)).